Here is a 201-residue protein sequence, read N- to C-terminus: Imidazoleglycerol-phosphate dehydratase (201 aa).

This sequence belongs to the imidazoleglycerol-phosphate dehydratase family.

The protein localises to the cytoplasm. The catalysed reaction is D-erythro-1-(imidazol-4-yl)glycerol 3-phosphate = 3-(imidazol-4-yl)-2-oxopropyl phosphate + H2O. It participates in amino-acid biosynthesis; L-histidine biosynthesis; L-histidine from 5-phospho-alpha-D-ribose 1-diphosphate: step 6/9. The chain is Imidazoleglycerol-phosphate dehydratase from Synechococcus sp. (strain CC9902).